The primary structure comprises 183 residues: Dual-action ribosomal maturation protein DarP (183 aa).

It belongs to the DarP family.

Its subcellular location is the cytoplasm. In terms of biological role, member of a network of 50S ribosomal subunit biogenesis factors which assembles along the 30S-50S interface, preventing incorrect 23S rRNA structures from forming. Promotes peptidyl transferase center (PTC) maturation. This chain is Dual-action ribosomal maturation protein DarP, found in Salmonella paratyphi A (strain ATCC 9150 / SARB42).